The primary structure comprises 343 residues: Methionine import ATP-binding protein MetN (343 aa).

One can recognise an ABC transporter domain in the interval 2–241; the sequence is ITLSHITKQF…PKTPLAQAFI (240 aa). 38-45 is an ATP binding site; it reads GASGAGKS.

It belongs to the ABC transporter superfamily. Methionine importer (TC 3.A.1.24) family. The complex is composed of two ATP-binding proteins (MetN), two transmembrane proteins (MetI) and a solute-binding protein (MetQ).

It is found in the cell inner membrane. It catalyses the reaction L-methionine(out) + ATP + H2O = L-methionine(in) + ADP + phosphate + H(+). The catalysed reaction is D-methionine(out) + ATP + H2O = D-methionine(in) + ADP + phosphate + H(+). Functionally, part of the ABC transporter complex MetNIQ involved in methionine import. Responsible for energy coupling to the transport system. The sequence is that of Methionine import ATP-binding protein MetN from Sodalis glossinidius (strain morsitans).